A 74-amino-acid polypeptide reads, in one-letter code: Delta-actitoxin-Amc3a (74 aa).

A signal peptide spans 1-19 (MNRLIILVVAAVFLGMASA). The propeptide occupies 20–24 (EEDVL). P29 bears the Hydroxyproline mark. Disulfide bonds link C30–C70, C32–C60, and C53–C71. A Glutamine amide modification is found at Q73.

This sequence belongs to the sea anemone sodium channel inhibitory toxin family. Type I subfamily.

It localises to the secreted. Its subcellular location is the nematocyst. Its function is as follows. Inhibits voltage-gated sodium channels (Nav). The protein is Delta-actitoxin-Amc3a of Antheopsis maculata (Sea anemone).